The primary structure comprises 330 residues: GTPase Obg (330 aa).

An Obg domain is found at 1–159 (MHFIDEVKIY…MWIHLSLKLL (159 aa)). An OBG-type G domain is found at 160 to 327 (SDVGLVGLPN…IVKLALETIK (168 aa)). Residues 166–173 (GLPNAGKS), 191–195 (FTTLV), 212–215 (DIPG), 279–282 (NKCD), and 308–310 (STC) contribute to the GTP site. Positions 173 and 193 each coordinate Mg(2+).

The protein belongs to the TRAFAC class OBG-HflX-like GTPase superfamily. OBG GTPase family. Monomer. Mg(2+) serves as cofactor.

Its subcellular location is the cytoplasm. Functionally, an essential GTPase which binds GTP, GDP and possibly (p)ppGpp with moderate affinity, with high nucleotide exchange rates and a fairly low GTP hydrolysis rate. Plays a role in control of the cell cycle, stress response, ribosome biogenesis and in those bacteria that undergo differentiation, in morphogenesis control. In Rickettsia rickettsii (strain Iowa), this protein is GTPase Obg.